The primary structure comprises 837 residues: V-type proton ATPase 116 kDa subunit a 1 (837 aa).

Over Met-1–Glu-388 the chain is Cytoplasmic. A phosphothreonine mark is found at Thr-250 and Thr-360. Tyr-364 carries the post-translational modification Phosphotyrosine. Residues Ile-389–Phe-407 traverse the membrane as a helical segment. At Gly-408–Asp-409 the chain is on the vacuolar side. Residues Phe-410 to Arg-426 traverse the membrane as a helical segment. The Cytoplasmic segment spans residues Glu-427–Ser-441. Residues Thr-442–Ser-471 form a helical membrane-spanning segment. The Vacuolar portion of the chain corresponds to Leu-472–Ser-534. Asn-488 carries an N-linked (GalNAc...) asparagine glycan. The helical transmembrane segment at Phe-535 to Leu-554 threads the bilayer. The Cytoplasmic segment spans residues Ser-555 to Phe-572. Residues Ile-573–Lys-593 form a helical membrane-spanning segment. At Trp-594–Phe-638 the chain is on the vacuolar side. A helical membrane pass occupies residues Leu-639–Leu-658. Topologically, residues Arg-659–Thr-724 are cytoplasmic. A helical transmembrane segment spans residues Ile-725–Ala-749. Residues Gln-750–Ala-770 lie on the Vacuolar side of the membrane. Residues Gly-771–Glu-809 traverse the membrane as a helical segment. Topologically, residues Phe-810 to Glu-837 are cytoplasmic.

Belongs to the V-ATPase 116 kDa subunit family. As to quaternary structure, V-ATPase is a heteromultimeric enzyme made up of two complexes: the ATP-hydrolytic V1 complex and the proton translocation V0 complex. The V1 complex consists of three catalytic AB heterodimers that form a heterohexamer, three peripheral stalks each consisting of EG heterodimers, one central rotor including subunits D and F, and the regulatory subunits C and H. The proton translocation complex V0 consists of the proton transport subunit a, a ring of proteolipid subunits c9c'', rotary subunit d, subunits e and f, and the accessory subunits ATP6AP1/Ac45 and ATP6AP2/PRR. Interacts with SPAAR.

Its subcellular location is the cytoplasmic vesicle. It localises to the clathrin-coated vesicle membrane. The protein resides in the secretory vesicle. The protein localises to the synaptic vesicle membrane. It is found in the melanosome. Functionally, subunit of the V0 complex of vacuolar(H+)-ATPase (V-ATPase), a multisubunit enzyme composed of a peripheral complex (V1) that hydrolyzes ATP and a membrane integral complex (V0) that transports protons across cellular membranes. V-ATPase is responsible for the acidification of various organelles, such as lysosomes, endosomes, the trans-Golgi network, and secretory granules, including synaptic vesicles. In certain cell types, can be exported to the plasma membrane, where it is involved in the acidification of the extracellular environment. Required for assembly and activity of the vacuolar ATPase. Through its action on compartment acidification, plays an essential role in neuronal development in terms of integrity and connectivity of neurons. The sequence is that of V-type proton ATPase 116 kDa subunit a 1 (ATP6V0A1) from Homo sapiens (Human).